The primary structure comprises 466 residues: Cysteine--tRNA ligase 1 (466 aa).

Cys27 serves as a coordination point for Zn(2+). The 'HIGH' region motif lies at 29–39 (PTVQSPPHIGH). Residues Cys211, His236, and Glu240 each contribute to the Zn(2+) site. A 'KMSKS' region motif is present at residues 267–271 (KMSKS). Lys270 is a binding site for ATP.

It belongs to the class-I aminoacyl-tRNA synthetase family. In terms of assembly, monomer. Requires Zn(2+) as cofactor.

It localises to the cytoplasm. It catalyses the reaction tRNA(Cys) + L-cysteine + ATP = L-cysteinyl-tRNA(Cys) + AMP + diphosphate. In Tropheryma whipplei (strain TW08/27) (Whipple's bacillus), this protein is Cysteine--tRNA ligase 1.